We begin with the raw amino-acid sequence, 424 residues long: Glutamate-1-semialdehyde 2,1-aminomutase (424 aa).

Lys-268 bears the N6-(pyridoxal phosphate)lysine mark.

Belongs to the class-III pyridoxal-phosphate-dependent aminotransferase family. HemL subfamily. Pyridoxal 5'-phosphate serves as cofactor.

It is found in the cytoplasm. It catalyses the reaction (S)-4-amino-5-oxopentanoate = 5-aminolevulinate. It participates in porphyrin-containing compound metabolism; protoporphyrin-IX biosynthesis; 5-aminolevulinate from L-glutamyl-tRNA(Glu): step 2/2. The protein is Glutamate-1-semialdehyde 2,1-aminomutase of Methanosarcina acetivorans (strain ATCC 35395 / DSM 2834 / JCM 12185 / C2A).